Consider the following 1408-residue polypeptide: TSET complex member tstA (1408 aa).

3 disordered regions span residues 259 to 347 (FWPT…SIIA), 998 to 1055 (QQSS…AVGS), and 1091 to 1139 (SSSS…TNLN). Low complexity predominate over residues 266–308 (NNNNNNNNQQINNNNNNNNNNNNNNNNNNNNNNNNNNNNNQNN). The span at 309 to 318 (LINGISSMNL) shows a compositional bias: polar residues. Low complexity-rich tracts occupy residues 319 to 347 (SSIT…SIIA) and 998 to 1051 (QQSS…ISTS).

This sequence belongs to the TPLATE family. As to quaternary structure, component of the TSET complex, a heterohexamer composed of tstA, tstB, tstC, tstD, tstE and tstF, which may act in plasma membrane turnover. tstA, tstB, tstC and tstD are likely to be the core complex members with tstE and tstF acting as associated scaffold proteins.

The sequence is that of TSET complex member tstA from Dictyostelium discoideum (Social amoeba).